Consider the following 108-residue polypeptide: Nucleoid-associated protein Bphy_0952 (108 aa).

Residues 87–108 are disordered; sequence AQEKMGGMTSGLPLPPGFKLPF. Positions 99–108 are enriched in pro residues; that stretch reads PLPPGFKLPF.

It belongs to the YbaB/EbfC family. Homodimer.

It localises to the cytoplasm. The protein resides in the nucleoid. Its function is as follows. Binds to DNA and alters its conformation. May be involved in regulation of gene expression, nucleoid organization and DNA protection. The protein is Nucleoid-associated protein Bphy_0952 of Paraburkholderia phymatum (strain DSM 17167 / CIP 108236 / LMG 21445 / STM815) (Burkholderia phymatum).